The primary structure comprises 351 residues: Dihydroorotate dehydrogenase (quinone) (351 aa).

Residues 61–65 and T85 each bind FMN; that span reads AGLDK. K65 lines the substrate pocket. 110–114 is a substrate binding site; that stretch reads NRMGF. FMN-binding residues include N139 and N172. N172 lines the substrate pocket. The active-site Nucleophile is the S175. N177 contributes to the substrate binding site. 2 residues coordinate FMN: K217 and T245. Residue 246–247 coordinates substrate; the sequence is NT. FMN is bound by residues G268, G297, and 318–319; that span reads YS.

It belongs to the dihydroorotate dehydrogenase family. Type 2 subfamily. Monomer. It depends on FMN as a cofactor.

It localises to the cell membrane. It carries out the reaction (S)-dihydroorotate + a quinone = orotate + a quinol. It participates in pyrimidine metabolism; UMP biosynthesis via de novo pathway; orotate from (S)-dihydroorotate (quinone route): step 1/1. Catalyzes the conversion of dihydroorotate to orotate with quinone as electron acceptor. In Xanthomonas oryzae pv. oryzae (strain PXO99A), this protein is Dihydroorotate dehydrogenase (quinone).